The chain runs to 198 residues: MADTAQEPRLITETGIDQRIAEIIEPVLTGMGYLLVRVRLSNQNGMTLQVMAEREDGTMNVQDCEAISMAISPVLDVEDPVEKAYHLEVSSPGIDRPMVRKTDFTRWQGHLVKVETSILVENRKRFRGKIVEVDADSFKLERDQIAYGEEPTVVVPFNALSDAKLILTDDLIRDALRADKAAKAAAANQNDENEADED.

It belongs to the RimP family.

It is found in the cytoplasm. Functionally, required for maturation of 30S ribosomal subunits. The chain is Ribosome maturation factor RimP from Agrobacterium fabrum (strain C58 / ATCC 33970) (Agrobacterium tumefaciens (strain C58)).